Here is a 406-residue protein sequence, read N- to C-terminus: 2-epi-valiolone synthase (406 aa).

The segment at 1–21 (MPSTGSTPILAHDVKSPHRGS) is disordered. Residues 105–108 (EPSK), 137–141 (GVLCD), 161–162 (TS), K174, K183, and 201–204 (CLAT) each bind NAD(+). Positions 216, 287, and 304 each coordinate Zn(2+).

Belongs to the sugar phosphate cyclases superfamily. EVS family. NAD(+) is required as a cofactor. The cofactor is Co(2+). Requires Zn(2+) as cofactor.

The catalysed reaction is D-sedoheptulose 7-phosphate = 2-epi-valiolone + phosphate. Catalyzes the conversion of sedoheptulose 7-phosphate to 2-epi-valiolone, which may serve as an alternative precursor for aminocyclitol biosynthesis. The sequence is that of 2-epi-valiolone synthase from Stigmatella aurantiaca (strain DW4/3-1).